The primary structure comprises 886 residues: Alanine--tRNA ligase (886 aa).

Residues histidine 564, histidine 568, cysteine 666, and histidine 670 each coordinate Zn(2+).

It belongs to the class-II aminoacyl-tRNA synthetase family. Requires Zn(2+) as cofactor.

The protein resides in the cytoplasm. The catalysed reaction is tRNA(Ala) + L-alanine + ATP = L-alanyl-tRNA(Ala) + AMP + diphosphate. Its function is as follows. Catalyzes the attachment of alanine to tRNA(Ala) in a two-step reaction: alanine is first activated by ATP to form Ala-AMP and then transferred to the acceptor end of tRNA(Ala). Also edits incorrectly charged Ser-tRNA(Ala) and Gly-tRNA(Ala) via its editing domain. The chain is Alanine--tRNA ligase from Prochlorococcus marinus (strain MIT 9312).